The sequence spans 320 residues: rRNA methyltransferase 2, mitochondrial (320 aa).

The N-terminal 18 residues, 1–18, are a transit peptide targeting the mitochondrion; it reads MILVYNRIRSIISSSLGR. Residues 83-86, D104, 178-179, and D203 contribute to the S-adenosyl-L-methionine site; these read PGAW and DI. The active-site Proton acceptor is the K264.

This sequence belongs to the class I-like SAM-binding methyltransferase superfamily. RNA methyltransferase RlmE family.

The protein localises to the mitochondrion. It catalyses the reaction uridine(2791) in 21S rRNA + S-adenosyl-L-methionine = 2'-O-methyluridine(2791) in 21S rRNA + S-adenosyl-L-homocysteine + H(+). In terms of biological role, S-adenosyl-L-methionine-dependent 2'-O-ribose methyltransferase that catalyzes the formation of 2'-O-methyluridine at position 2791 (Um2791) in the 21S mitochondrial large subunit ribosomal RNA (mtLSU rRNA), a universally conserved modification in the peptidyl transferase domain of the mtLSU rRNA. This is rRNA methyltransferase 2, mitochondrial from Saccharomyces cerevisiae (strain ATCC 204508 / S288c) (Baker's yeast).